The sequence spans 392 residues: Probable tRNA pseudouridine synthase D 1 (392 aa).

The active-site Nucleophile is the Asp92. The 188-residue stretch at 167-354 (YFLNYYGVQR…FIGDRRAMIG (188 aa)) folds into the TRUD domain.

Belongs to the pseudouridine synthase TruD family.

It carries out the reaction uridine(13) in tRNA = pseudouridine(13) in tRNA. Functionally, could be responsible for synthesis of pseudouridine from uracil-13 in transfer RNAs. The sequence is that of Probable tRNA pseudouridine synthase D 1 from Methanocaldococcus jannaschii (strain ATCC 43067 / DSM 2661 / JAL-1 / JCM 10045 / NBRC 100440) (Methanococcus jannaschii).